A 43-amino-acid polypeptide reads, in one-letter code: Protein PsbN (43 aa).

The chain crosses the membrane as a helical span at residues Val-7–Phe-27.

It belongs to the PsbN family.

The protein resides in the plastid. It is found in the chloroplast thylakoid membrane. May play a role in photosystem I and II biogenesis. This Huperzia lucidula (Shining clubmoss) protein is Protein PsbN.